The chain runs to 539 residues: GMP synthase [glutamine-hydrolyzing] (539 aa).

Residues 4–202 (KILILDFGSQ…VLQIAGAKPD (199 aa)) enclose the Glutamine amidotransferase type-1 domain. The active-site Nucleophile is cysteine 81. Residues histidine 176 and glutamate 178 contribute to the active site. The 193-residue stretch at 203–395 (WIMKNHIEEA…LGLPPEMVYR (193 aa)) folds into the GMPS ATP-PPase domain. Residue 230–236 (SGGVDSS) coordinates ATP.

Homodimer.

The enzyme catalyses XMP + L-glutamine + ATP + H2O = GMP + L-glutamate + AMP + diphosphate + 2 H(+). It functions in the pathway purine metabolism; GMP biosynthesis; GMP from XMP (L-Gln route): step 1/1. Functionally, catalyzes the synthesis of GMP from XMP. The sequence is that of GMP synthase [glutamine-hydrolyzing] from Burkholderia cenocepacia (strain ATCC BAA-245 / DSM 16553 / LMG 16656 / NCTC 13227 / J2315 / CF5610) (Burkholderia cepacia (strain J2315)).